Reading from the N-terminus, the 62-residue chain is Photosystem II reaction center protein Z (62 aa).

2 helical membrane-spanning segments follow: residues 8 to 28 (SVFA…VVLA) and 41 to 61 (FSGA…NSFI).

This sequence belongs to the PsbZ family. As to quaternary structure, PSII is composed of 1 copy each of membrane proteins PsbA, PsbB, PsbC, PsbD, PsbE, PsbF, PsbH, PsbI, PsbJ, PsbK, PsbL, PsbM, PsbT, PsbY, PsbZ, Psb30/Ycf12, at least 3 peripheral proteins of the oxygen-evolving complex and a large number of cofactors. It forms dimeric complexes.

It is found in the plastid. The protein localises to the chloroplast thylakoid membrane. Functionally, may control the interaction of photosystem II (PSII) cores with the light-harvesting antenna, regulates electron flow through the 2 photosystem reaction centers. PSII is a light-driven water plastoquinone oxidoreductase, using light energy to abstract electrons from H(2)O, generating a proton gradient subsequently used for ATP formation. The chain is Photosystem II reaction center protein Z from Staurastrum punctulatum (Green alga).